We begin with the raw amino-acid sequence, 152 residues long: Probable methionine-R-sulfoxide reductase B (152 aa).

The MsrB domain maps to 27 to 151 (QTEWKSVLPN…NSVCMAFEKK (125 aa)). Zn(2+) is bound by residues Cys-66, Cys-69, Cys-116, and Cys-119. Cys-140 serves as the catalytic Nucleophile.

This sequence belongs to the MsrB Met sulfoxide reductase family. The cofactor is Zn(2+).

It catalyses the reaction L-methionyl-[protein] + [thioredoxin]-disulfide + H2O = L-methionyl-(R)-S-oxide-[protein] + [thioredoxin]-dithiol. Functionally, methionine-sulfoxide reductase that specifically reduces methionine (R)-sulfoxide back to methionine. While in many cases, methionine oxidation is the result of random oxidation following oxidative stress, methionine oxidation is also a post-translational modification that takes place on specific residue. This is Probable methionine-R-sulfoxide reductase B from Caenorhabditis elegans.